Here is a 92-residue protein sequence, read N- to C-terminus: UPF0223 protein SSA_0938 (92 aa).

The protein belongs to the UPF0223 family.

The polypeptide is UPF0223 protein SSA_0938 (Streptococcus sanguinis (strain SK36)).